The following is a 60-amino-acid chain: Rubredoxin 4 (60 aa).

The 52-residue stretch at 4–55 folds into the Rubredoxin-like domain; that stretch reads YKLYQCAQCGFEYDEAVGWPEDGIEPGTRWDDIPEDWSCPDCGAAKSDFFMV. Residues cysteine 9, cysteine 12, cysteine 42, and cysteine 45 each contribute to the Fe cation site.

This sequence belongs to the rubredoxin family. Requires Fe(3+) as cofactor.

In terms of biological role, involved in the hydrocarbon hydroxylating system, which transfers electrons from NADH to rubredoxin reductase and then through rubredoxin to alkane 1 monooxygenase. In Rhodococcus sp. (strain Q15), this protein is Rubredoxin 4 (rubA4).